A 383-amino-acid chain; its full sequence is tRNA(Met) cytidine acetate ligase (383 aa).

ATP-binding positions include 7–20 (ISEYNPFHNGHLYQ), G102, N160, and 181–182 (RI).

The protein belongs to the TmcAL family.

Its subcellular location is the cytoplasm. The enzyme catalyses cytidine(34) in elongator tRNA(Met) + acetate + ATP = N(4)-acetylcytidine(34) in elongator tRNA(Met) + AMP + diphosphate. Its function is as follows. Catalyzes the formation of N(4)-acetylcytidine (ac(4)C) at the wobble position of elongator tRNA(Met), using acetate and ATP as substrates. First activates an acetate ion to form acetyladenylate (Ac-AMP) and then transfers the acetyl group to tRNA to form ac(4)C34. The protein is tRNA(Met) cytidine acetate ligase of Exiguobacterium sibiricum (strain DSM 17290 / CCUG 55495 / CIP 109462 / JCM 13490 / 255-15).